Here is a 356-residue protein sequence, read N- to C-terminus: Histidinol-phosphate aminotransferase (356 aa).

An N6-(pyridoxal phosphate)lysine modification is found at Lys-214.

Belongs to the class-II pyridoxal-phosphate-dependent aminotransferase family. Histidinol-phosphate aminotransferase subfamily. In terms of assembly, homodimer. The cofactor is pyridoxal 5'-phosphate.

The enzyme catalyses L-histidinol phosphate + 2-oxoglutarate = 3-(imidazol-4-yl)-2-oxopropyl phosphate + L-glutamate. It functions in the pathway amino-acid biosynthesis; L-histidine biosynthesis; L-histidine from 5-phospho-alpha-D-ribose 1-diphosphate: step 7/9. In Escherichia coli (strain 55989 / EAEC), this protein is Histidinol-phosphate aminotransferase.